The following is a 295-amino-acid chain: Acetylglutamate kinase (295 aa).

Residues Gly-61–Gly-62, Arg-83, and Asn-182 contribute to the substrate site.

It belongs to the acetylglutamate kinase family. ArgB subfamily.

Its subcellular location is the cytoplasm. The catalysed reaction is N-acetyl-L-glutamate + ATP = N-acetyl-L-glutamyl 5-phosphate + ADP. It participates in amino-acid biosynthesis; L-arginine biosynthesis; N(2)-acetyl-L-ornithine from L-glutamate: step 2/4. Its function is as follows. Catalyzes the ATP-dependent phosphorylation of N-acetyl-L-glutamate. The protein is Acetylglutamate kinase of Clostridium acetobutylicum (strain ATCC 824 / DSM 792 / JCM 1419 / IAM 19013 / LMG 5710 / NBRC 13948 / NRRL B-527 / VKM B-1787 / 2291 / W).